Reading from the N-terminus, the 242-residue chain is Myogenic factor 6 (242 aa).

The segment at 31 to 63 is disordered; the sequence is SPLYPGSDGTLSPCQDQMPPEAGSDSSGEEHVL. In terms of domain architecture, bHLH spans 93–144; sequence DRRKAATLRERRRLKKINEAFEALKRRTVANPNQRLPKVEILRSAISYIERL.

Efficient DNA binding requires dimerization with another bHLH protein. Interacts with CSRP3. Skeletal muscle.

Its subcellular location is the nucleus. In terms of biological role, involved in muscle differentiation (myogenic factor). Induces fibroblasts to differentiate into myoblasts. Probable sequence specific DNA-binding protein. The polypeptide is Myogenic factor 6 (MYF6) (Homo sapiens (Human)).